A 2157-amino-acid polypeptide reads, in one-letter code: MSVKEAGSSGRREQAAYHLHIYPQLSTTESQASCRVTATKDSTTSDVIKDAIASLRLDGTKCYVLVEVKESGGEEWVLDANDSPVHRVLLWPRRAQDEHPQEDGYYFLLQERNADGTIKYVHMQLVAQATATRRLVERGLLPRQQADFDDLCNLPELTEGNLLKNLKHRFLQQKIYTYAGSILVAINPFKFLPIYNPKYVKMYENQQLGKLEPHVFALADVAYYTMLRKRVNQCIVISGESGSGKTQSTNFLIHCLTALSQKGYASGVERTILGAGPVLEAFGNAKTAHNNNSSRFGKFIQVSYLESGIVRGAVVEKYLLEKSRLVSQEKDERNYHVFYYLLLGVSEEERQEFQLKQPEDYFYLNQHNLKIEDGEDLKHDFERLKQAMEMVGFLPATKKQIFAVLSAILYLGNVTYKKRATGREEGLEVGPPEVLDTLSQLLKVKREILVEVLTKRKTVTVNDKLILPYSLSEAITARDSMAKSLYSALFDWIVLRINHALLNKKDVEEAVSCLSIGVLDIFGFEDFERNSFEQFCINYANEQLQYYFNQHIFKLEQEEYQGEGITWHNIGYTDNVGCIHLISKKPTGLFYLLDEESNFPHATSQTLLAKFKQQHEDNKYFLGTPVMEPAFIIQHFAGKVKYQIKDFREKNMDYMRPDIVALLRGSDSSYVRELIGMDPVAVFRWAVLRAAIRAMAVLREAGRLRAERAEKAAGMSSPGAQSHPEELPRGASTPSEKLYRDLHNQMIKSIKGLPWQGEDPRSLLQSLSRLQKPRAFILKSKGIKQKQIIPKNLLDSKSLKLIISMTLHDRTTKSLLHLHKKKKPPSISAQFQTSLNKLLEALGKAEPFFIRCIRSNAEKKELCFDDELVLQQLRYTGMLETVRIRRSGYSAKYTFQDFTEQFQVLLPKDAQPCREVISTLLEKMKIDKRNYQIGKTKVFLKETERQALQETLHREVVRKILLLQSWFRMVLERRHFLQMKRAAVTIQACWRSYRVRRALERTQAAVYLQASWRGYWQRKLYRHQKQSIIRLQSLCRGHLQRKSFSQMISEKQKAEEKEREALEAARAGAEEGGQGQAAGGQQVAEQGPEPAEDGGHLASEPEVQPSDRSPLEHSSPEKEAPSPEKTLPPQKTVAAESHEKVPSSREKRESRRQRGLEHVKFQNKHIQSCKEESALREPSRRVTQEQGVSLLEDKKESREDETLLVVETEAENTSQKQPTEQPQAMAVGKVSEETEKTLPSGSPRPGQLERPTSLALDSRVSPPAPGSAPETPEDKSKPCGSPRVQEKPDSPGGSTQIQRYLDAERLASAVELWRGKKLVAAASPSAMLSQSLDLSDRHRATGAALTPTEERRTSFSTSDVSKLLPSLAKAQPAAETTDGERSAKKPAVQKKKPGDASSLPDAGLSPGSQVDSKSTFKRLFLHKTKDKKYSLEGAEELENAVSGHVVLEATTMKKGLEAPSGQQHRHAAGEKRTKEPGGKGKKNRNVKIGKITVSEKWRESVFRQITNANELKYLDEFLLNKINDLRSQKTPIESLFIEATEKFRSNIKTMYSVPNGKIHVGYKDLMENYQIVVSNLATERGQKDTNLVLNLFQSLLDEFTRGYTKNDFEPVKQSKAQKKKRKQERAVQEHNGHVFASYQVSIPQSCEQCLSYIWLMDKALLCSVCKMTCHKKCVHKIQSHCSYTYGRKGEPGVEPGHFGVCVDSLTSDKASVPIVLEKLLEHVEMHGLYTEGLYRKSGAANRTRELRQALQTDPAAVKLENFPIHAITGVLKQWLRELPEPLMTFAQYGDFLRAVELPEKQEQLAAIYAVLEHLPEANHNSLERLIFHLVKVALLEDVNRMSPGALAIIFAPCLLRCPDNSDPLTSMKDVLKITTCVEMLIKEQMRKYKVKMEEISQLEAAESIAFRRLSLLRQNAPWPLKLGFSSPYEGVLNKSPKTRDIQEEELEVLLEEEAAGGDEDREKEILIERIQSIKEEKEDITYRLPELDPRGSDEENLDSETSASTESLLEERAGRGASEGPPAPALPCPGAPTPSPLPTVAAPPRRRPSSFVTVRVKTPRRTPIMPTANIKLPPGLPSHLPRWAPGAREAAAPVRRREPPARRPDQIHSVYITPGADLPVQGALEPLEEDGQPPGAKRRYSDPPTYCLPPASGQTNG.

At Ser-2 the chain carries N-acetylserine. One can recognise a Ras-associating domain in the interval 15–114; the sequence is AAYHLHIYPQ…YYFLLQERNA (100 aa). The 808-residue stretch at 146 to 953 folds into the Myosin motor domain; it reads ADFDDLCNLP…ERQALQETLH (808 aa). Residue 239–246 coordinates ATP; that stretch reads GESGSGKT. Positions 709-734 are disordered; the sequence is AEKAAGMSSPGAQSHPEELPRGASTP. Residues Ser-716 and Ser-717 each carry the phosphoserine modification. An actin-binding region spans residues 844 to 855; sequence KAEPFFIRCIRS. The segment at 940 to 1044 is neck or regulatory domain; that stretch reads LKETERQALQ…CRGHLQRKSF (105 aa). 4 consecutive IQ domains span residues 957 to 977, 979 to 1000, 1001 to 1023, and 1024 to 1053; these read VRKI…RHFL, MKRA…RALE, RTQA…LYRH, and QKQS…EKQK. Phosphoserine is present on Ser-1045. The tail stretch occupies residues 1045–2157; the sequence is SQMISEKQKA…LPPASGQTNG (1113 aa). Positions 1046–1071 form a coiled coil; it reads QMISEKQKAEEKEREALEAARAGAEE. Disordered stretches follow at residues 1046-1298, 1320-1410, and 1455-1484; these read QMIS…TQIQ, AAAS…GSQV, and GLEA…KKNR. Basic and acidic residues-rich tracts occupy residues 1050 to 1063, 1109 to 1122, 1136 to 1160, 1168 to 1183, and 1191 to 1201; these read EKQK…EALE, SPLE…EAPS, ESHE…EHVK, SCKE…RRVT, and LEDKKESREDE. 3 positions are modified to phosphoserine: Ser-1114, Ser-1115, and Ser-1122. Polar residues predominate over residues 1211-1222; it reads ENTSQKQPTEQP. Phosphoserine occurs at positions 1242, 1253, 1261, and 1267. Thr-1271 carries the post-translational modification Phosphothreonine. Ser-1290, Ser-1323, and Ser-1331 each carry phosphoserine. Thr-1346 carries the post-translational modification Phosphothreonine. Phosphoserine is present on residues Ser-1354, Ser-1356, and Ser-1405. A compositionally biased stretch (basic and acidic residues) spans 1467-1478; that stretch reads AAGEKRTKEPGG. The Phorbol-ester/DAG-type zinc finger occupies 1632–1681; it reads GHVFASYQVSIPQSCEQCLSYIWLMDKALLCSVCKMTCHKKCVHKIQSHC. The 186-residue stretch at 1703-1888 folds into the Rho-GAP domain; the sequence is DSLTSDKASV…MLIKEQMRKY (186 aa). The tract at residues 1739-1744 is interaction with RHOA; that stretch reads AANRTR. A coiled-coil region spans residues 1880–1901; sequence LIKEQMRKYKVKMEEISQLEAA. A phosphoserine mark is found at Ser-1926, Ser-1972, Ser-1992, and Ser-1999. Residues 1959-1989 are a coiled coil; it reads EDREKEILIERIQSIKEEKEDITYRLPELDP. Residues 1980–1993 are compositionally biased toward basic and acidic residues; sequence ITYRLPELDPRGSD. The tract at residues 1980-2157 is disordered; that stretch reads ITYRLPELDP…LPPASGQTNG (178 aa). Position 2005 is a phosphothreonine (Thr-2005). The segment covering 2021-2037 has biased composition (pro residues); the sequence is PPAPALPCPGAPTPSPL. The residue at position 2050 (Ser-2050) is a Phosphoserine. The segment covering 2081–2093 has biased composition (low complexity); sequence PRWAPGAREAAAP. A compositionally biased stretch (basic and acidic residues) spans 2095 to 2106; that stretch reads RRREPPARRPDQ. Phosphoserine is present on Ser-2141.

The protein belongs to the TRAFAC class myosin-kinesin ATPase superfamily. Myosin family. Interacts (via IQ domains) with CALM. Interacts with RHOA. Interacts (via Rho-GAP domain) with ROBO1; this inhibits the interaction with RHOA and the stimulation of RHOA GTPase activity, and thereby increases the levels of active RHOA. In terms of tissue distribution, detected in peripheral blood leukocytes (at protein level). Expressed predominantly in peripheral blood leukocytes and at lower levels, in thymus, spleen, testis, prostate, ovary, brain, small intestine and lung.

The protein localises to the cytoplasm. The protein resides in the cell cortex. It localises to the perinuclear region. It is found in the cytoskeleton. Functionally, myosins are actin-based motor molecules with ATPase activity. Unconventional myosins serve in intracellular movements. Binds actin with high affinity both in the absence and presence of ATP and its mechanochemical activity is inhibited by calcium ions. Also acts as a GTPase activator for RHOA. Plays a role in the regulation of cell migration via its role as RHOA GTPase activator. This is regulated by its interaction with the SLIT2 receptor ROBO1; interaction with ROBO1 impairs interaction with RHOA and subsequent activation of RHOA GTPase activity, and thereby leads to increased levels of active, GTP-bound RHOA. The chain is Unconventional myosin-IXb (MYO9B) from Homo sapiens (Human).